A 513-amino-acid chain; its full sequence is Histidine ammonia-lyase (513 aa).

The segment at residues 146–148 is a cross-link (5-imidazolinone (Ala-Gly)); sequence ASG. Serine 147 bears the 2,3-didehydroalanine (Ser) mark.

The protein belongs to the PAL/histidase family. In terms of processing, contains an active site 4-methylidene-imidazol-5-one (MIO), which is formed autocatalytically by cyclization and dehydration of residues Ala-Ser-Gly.

It is found in the cytoplasm. It carries out the reaction L-histidine = trans-urocanate + NH4(+). It participates in amino-acid degradation; L-histidine degradation into L-glutamate; N-formimidoyl-L-glutamate from L-histidine: step 1/3. The sequence is that of Histidine ammonia-lyase from Caulobacter vibrioides (strain NA1000 / CB15N) (Caulobacter crescentus).